The following is a 489-amino-acid chain: GTPase Der (489 aa).

EngA-type G domains follow at residues 30 to 199 (PVVS…KDKP) and 227 to 403 (FRLA…SRSH). GTP is bound by residues 36–43 (GRQNVGKS), 85–89 (DTPGL), 151–154 (NKAD), 233–240 (GKPNSGKS), 280–284 (DTAGI), and 345–348 (NKWD). The KH-like domain occupies 404-488 (RKVSTSELNK…PIRLEFRSDR (85 aa)).

This sequence belongs to the TRAFAC class TrmE-Era-EngA-EngB-Septin-like GTPase superfamily. EngA (Der) GTPase family. As to quaternary structure, associates with the 50S ribosomal subunit.

Its function is as follows. GTPase that plays an essential role in the late steps of ribosome biogenesis. This Leptospira interrogans serogroup Icterohaemorrhagiae serovar Lai (strain 56601) protein is GTPase Der.